The sequence spans 245 residues: UPF0280 protein UNCMA_16740 (245 aa).

Belongs to the UPF0280 family.

This is UPF0280 protein UNCMA_16740 from Methanocella arvoryzae (strain DSM 22066 / NBRC 105507 / MRE50).